A 214-amino-acid polypeptide reads, in one-letter code: Galactokinase (214 aa).

R47, D53, H54, and D56 together coordinate alpha-D-galactose. Positions 149, 151, 153, and 154 each coordinate ATP. D199 contributes to the alpha-D-galactose binding site. Catalysis depends on D199, which acts as the Proton acceptor.

It belongs to the GHMP kinase family. GalK subfamily.

The enzyme catalyses alpha-D-galactose + ATP = alpha-D-galactose 1-phosphate + ADP + H(+). Its pathway is carbohydrate metabolism; galactose metabolism. Functionally, galactokinase is a key enzyme in the galactose metabolism where it catalyzes the conversion of alpha-D-galactose to galactose 1-phosphate. Can also induce the transcription of the gal genes in response to the organism being challenged with galactose as the sole source of carbon. The protein is Galactokinase of Candida maltosa (Yeast).